The following is a 61-amino-acid chain: Metallothionein-1 (61 aa).

M1 bears the N-acetylmethionine mark. Positions 1 to 29 are beta; it reads MDPNCSCSTGGSCTCSSSCGCKNCKCTSC. 20 residues coordinate a divalent metal cation: C5, C7, C13, C15, C19, C21, C24, C26, C29, C33, C34, C36, C37, C41, C44, C48, C50, C57, C59, and C60. The alpha stretch occupies residues 30–61; that stretch reads KKSCCSCCPVGCSKCAQGCVCKGASDKCTCCA.

It belongs to the metallothionein superfamily. Type 1 family.

Functionally, metallothioneins have a high content of cysteine residues that bind various heavy metals; these proteins are transcriptionally regulated by both heavy metals and glucocorticoids. This chain is Metallothionein-1 (Mt1), found in Rattus norvegicus (Rat).